Reading from the N-terminus, the 127-residue chain is Fluoride-specific ion channel FluC (127 aa).

Helical transmembrane passes span 4 to 24 (LLLA…LLSM), 35 to 55 (LGTL…FAWF), 71 to 91 (TGFC…VFLL), and 103 to 123 (VFVN…LFSA). Na(+) is bound by residues glycine 75 and threonine 78.

Belongs to the fluoride channel Fluc/FEX (TC 1.A.43) family.

The protein resides in the cell inner membrane. The enzyme catalyses fluoride(in) = fluoride(out). Na(+) is not transported, but it plays an essential structural role and its presence is essential for fluoride channel function. Fluoride-specific ion channel. Important for reducing fluoride concentration in the cell, thus reducing its toxicity. This Escherichia coli (strain K12 / MC4100 / BW2952) protein is Fluoride-specific ion channel FluC.